Consider the following 564-residue polypeptide: Plant UBX domain-containing protein 8 (564 aa).

Ala2 is modified (N-acetylalanine). Positions 2–44 (ATPNQEAIDTFISITGASDAVALQKLEEHRGDLNQAVNAYFSE) constitute a UBA-like domain. 2 UIM domains span residues 198–217 (IEEE…AEGS) and 230–249 (EDDD…AEEE). A disordered region spans residues 210–229 (SKKEAEGSSNPLLEERPLHM). Disordered stretches follow at residues 267-358 (AVTA…EEHD), 371-423 (IPET…DKEM), and 443-483 (FLEE…QADE). A compositionally biased stretch (acidic residues) spans 291–300 (FDDDSDDVDE). Phosphoserine is present on residues Ser295, Ser324, Ser326, and Ser328. Over residues 322 to 334 (DRSRSGSPEEEHA) the composition is skewed to basic and acidic residues. A compositionally biased stretch (pro residues) spans 381–395 (FLPPQPRAQPRPPSP). Positions 412 to 478 (VASLQADRDK…DAKEASLPKE (67 aa)) form a coiled coil. Over residues 443–475 (FLEEEKKKEEEAQRKLEEEQELERQLDAKEASL) the composition is skewed to basic and acidic residues. Residues 482-560 (DEENAITLLI…GLTSKQEALF (79 aa)) enclose the UBX domain.

In terms of assembly, interacts with RABA5C/ARA-4.

The polypeptide is Plant UBX domain-containing protein 8 (Arabidopsis thaliana (Mouse-ear cress)).